Here is a 343-residue protein sequence, read N- to C-terminus: Ricin B-like lectin R40G2 (343 aa).

The Ricin B-type lectin domain maps to 194 to 340 (TVRVFSAAGE…CEGDNQRWKI (147 aa)).

Its function is as follows. Lectin which binds carbohydrates in vitro. Interacts through its lectin domain with glycan structures containing specific motifs. The protein is Ricin B-like lectin R40G2 of Oryza sativa subsp. japonica (Rice).